A 241-amino-acid chain; its full sequence is tRNA pseudouridine synthase B (241 aa).

The active-site Nucleophile is the Asp45.

This sequence belongs to the pseudouridine synthase TruB family. Type 1 subfamily.

It carries out the reaction uridine(55) in tRNA = pseudouridine(55) in tRNA. Its function is as follows. Responsible for synthesis of pseudouridine from uracil-55 in the psi GC loop of transfer RNAs. This is tRNA pseudouridine synthase B from Chlamydia muridarum (strain MoPn / Nigg).